Consider the following 998-residue polypeptide: UPF0182 protein AAur_2732 (998 aa).

7 helical membrane-spanning segments follow: residues 18–38 (GALTPTLIVVAVAVVGFIFFA), 64–84 (IITFLIGFAMMFAAVFFAIRI), 115–135 (VVMIGLPILFGLFAGSAAASQ), 168–188 (FLGFITGFLISIAVVAGIAGI), 211–231 (QIHIAVTGALFLILLGVNFWL), 260–280 (AILAVAAGLVAILFIIAAIIG), and 287–307 (IGTAMLVITAILAGGVYPWVI). 3 disordered regions span residues 490 to 518 (GAPDGAPNREQDRPAGREGGGETQYTFSG), 888 to 923 (LFGGDSGATAGDSDNNGQTPTSPPGTTPPPAGPTDA), and 971 to 998 (QARLDATPAPTATPGATPSATPSPSPSS). Residues 496-509 (PNREQDRPAGREGG) are compositionally biased toward basic and acidic residues. Positions 908 to 919 (TSPPGTTPPPAG) are enriched in pro residues. Residues 976-990 (ATPAPTATPGATPSA) are compositionally biased toward low complexity.

The protein belongs to the UPF0182 family.

The protein resides in the cell membrane. The polypeptide is UPF0182 protein AAur_2732 (Paenarthrobacter aurescens (strain TC1)).